The sequence spans 72 residues: Mitotic-spindle organizing protein 1 (72 aa).

Belongs to the MOZART1 family. In terms of assembly, part of the gamma-tubulin complex.

The protein localises to the cytoplasm. Its subcellular location is the cytoskeleton. The protein resides in the microtubule organizing center. It localises to the spindle pole body. Its function is as follows. Required for gamma-tubulin complex recruitment to the microtubule organizing center (MTOC). This chain is Mitotic-spindle organizing protein 1, found in Cryptococcus neoformans var. neoformans serotype D (strain B-3501A) (Filobasidiella neoformans).